The following is a 978-amino-acid chain: LRR receptor-like serine/threonine-protein kinase ER1 (978 aa).

A signal peptide spans 1-24 (MTPAPAAASYRALVALLLVAVAVA). Over 25–577 (DDGSTLLEIK…GHQQKPLISK (553 aa)) the chain is Extracellular. N-linked (GlcNAc...) asparagine glycosylation is found at asparagine 62 and asparagine 71. LRR repeat units follow at residues 66-87 (AVAA…AVGR), 88-112 (LKGI…IGDC), 114-136 (SLKT…VSKL), 137-159 (KHIE…TLSQ), 160-184 (LPNL…IYWN), 186-208 (VLQY…ICQL), 209-232 (TGLW…IGNC), 233-257 (TSFQ…GFLQ), 259-278 (ATLS…VIGL), 279-302 (MQAL…ILGN), 304-327 (TYTE…LGNM), 328-350 (STLH…EFGK), 352-375 (TGLF…ISSC), 377-399 (NLNS…LHKL), 400-423 (ESMT…LSRI), 424-447 (NNLD…IGSL), 449-470 (HLLR…EIGN), 471-494 (LRSI…ELGM), 496-518 (QNLM…LMNC), and 519-543 (FSLN…NFSR). Asparagine 218 and asparagine 231 each carry an N-linked (GlcNAc...) asparagine glycan. Residues asparagine 302 and asparagine 326 are each glycosylated (N-linked (GlcNAc...) asparagine). Asparagine 371, asparagine 389, and asparagine 406 each carry an N-linked (GlcNAc...) asparagine glycan. An N-linked (GlcNAc...) asparagine glycan is attached at asparagine 454. N-linked (GlcNAc...) asparagine glycans are attached at residues asparagine 507, asparagine 525, and asparagine 540. Residues 578 to 598 (AAILGIAVGGLVILLMILVAV) traverse the membrane as a helical segment. Residues 599–978 (CRPHSPPVFK…FGEVISQNTE (380 aa)) are Cytoplasmic-facing. The Protein kinase domain occupies 645–916 (LSEKYIIGYG…EVVRVLDCLV (272 aa)). ATP is bound by residues 651–659 (IGYGASSTV) and lysine 673. Residue aspartate 771 is the Proton acceptor of the active site.

This sequence belongs to the protein kinase superfamily. Ser/Thr protein kinase family.

The protein localises to the cell membrane. It carries out the reaction L-seryl-[protein] + ATP = O-phospho-L-seryl-[protein] + ADP + H(+). The enzyme catalyses L-threonyl-[protein] + ATP = O-phospho-L-threonyl-[protein] + ADP + H(+). In terms of biological role, receptor kinase involved in the regulation of thermotolerance. Functions as a positive regulator of heat tolerance. May be involved in the regulation of cell proliferation and cell growth. The protein is LRR receptor-like serine/threonine-protein kinase ER1 of Oryza sativa subsp. japonica (Rice).